The following is a 94-amino-acid chain: Endoribonuclease VapD 2 (94 aa).

The protein belongs to the VapD ribonuclease family. As to quaternary structure, homodimer.

In terms of biological role, cleaves ssRNA, mostly between U:A. The protein is Endoribonuclease VapD 2 of Riemerella anatipestifer (Moraxella anatipestifer).